We begin with the raw amino-acid sequence, 436 residues long: Coiled-coil domain-containing protein 71 (436 aa).

The segment at 95 to 119 (ATSLPARAPQTAKSVPTGQTTLLPV) is disordered. The segment covering 105–116 (TAKSVPTGQTTL) has biased composition (polar residues). At Ser-129 the chain carries Phosphoserine. Disordered stretches follow at residues 210–258 (LRKG…MKGR) and 314–405 (ALRG…KVDR). Residues 264-334 (KTVRGKAPRT…QAKAKAARTK (71 aa)) adopt a coiled-coil conformation. Positions 329 to 340 (KAARTKHKKRPK) are enriched in basic residues. Residues 344–359 (QTRTGRTSLKNSSETV) show a composition bias toward polar residues. Basic residues predominate over residues 373-386 (PPKKRARCVPRSKA).

The chain is Coiled-coil domain-containing protein 71 (Ccdc71) from Rattus norvegicus (Rat).